A 319-amino-acid polypeptide reads, in one-letter code: Olfactory receptor 8U8 (319 aa).

At 1–28 (MAHINCTQATEFILVGLTDHQELKMPLF) the chain is on the extracellular side. N-linked (GlcNAc...) asparagine glycosylation is present at Asn-5. A helical transmembrane segment spans residues 29–49 (VLFLSIYLFTVVGNLGLILLI). At 50-56 (RADTSLN) the chain is on the cytoplasmic side. The helical transmembrane segment at 57–77 (TPMYFFLSNLAFVDFCYSSVI) threads the bilayer. Over 78–97 (TPKMLGNFLYKQNVISFDAC) the chain is Extracellular. Cys-97 and Cys-179 form a disulfide bridge. The chain crosses the membrane as a helical span at residues 98-118 (ATQLGCFLTFMVSESLLLASM). At 119 to 122 (AYDR) the chain is on the cytoplasmic side. The chain crosses the membrane as a helical span at residues 123 to 143 (YVAICNPLLYMVVMTPGICIQ). Residues 144–204 (LVAVPYSYSF…KQLWILACAG (61 aa)) are Extracellular-facing. Residues 205–225 (ITFICSVLIVFVSYMFIIFAI) traverse the membrane as a helical segment. Over 226 to 239 (LRMSSAEGRRKAFS) the chain is Cytoplasmic. The helical transmembrane segment at 240–260 (TCSSHMLAVTIFYGTLIFMYL) threads the bilayer. Over 261–271 (QPSSSHSLDAD) the chain is Extracellular. The chain crosses the membrane as a helical span at residues 272-292 (KMASVFYTVIIPMLNPLIYSL). Residues 293–319 (RNKDVKDALKKVIINRNHAFIFLKLRK) are Cytoplasmic-facing.

Belongs to the G-protein coupled receptor 1 family.

It localises to the cell membrane. In terms of biological role, odorant receptor. The protein is Olfactory receptor 8U8 (OR8U8) of Homo sapiens (Human).